Consider the following 246-residue polypeptide: Cold-regulated protein 27 (246 aa).

Disordered stretches follow at residues 1 to 39 (MVGD…MYSA) and 151 to 232 (EPEN…VVPL). Over residues 168–180 (SSGSASSLKQLSS) the composition is skewed to low complexity.

Its subcellular location is the nucleus. Its function is as follows. Together with COR28, involved in central circadian clock regulation and in flowering promotion, by binding to the chromatin of clock-associated evening genes TOC1, PRR5, ELF4 and cold-responsive genes in order to repress their transcription. Negative regulator of freezing tolerance. This Arabidopsis thaliana (Mouse-ear cress) protein is Cold-regulated protein 27.